Here is a 249-residue protein sequence, read N- to C-terminus: DNA repair protein RecO (249 aa).

This sequence belongs to the RecO family.

Involved in DNA repair and RecF pathway recombination. In Mycoplasma capricolum subsp. capricolum (strain California kid / ATCC 27343 / NCTC 10154), this protein is DNA repair protein RecO.